The primary structure comprises 201 residues: UPF0301 protein BP0319 (201 aa).

Belongs to the UPF0301 (AlgH) family.

In Bordetella pertussis (strain Tohama I / ATCC BAA-589 / NCTC 13251), this protein is UPF0301 protein BP0319.